The chain runs to 153 residues: Ribosomal RNA large subunit methyltransferase H (153 aa).

Residues Leu-75, Gly-102, and 121–126 (LSPLTM) contribute to the S-adenosyl-L-methionine site.

This sequence belongs to the RNA methyltransferase RlmH family. In terms of assembly, homodimer.

It localises to the cytoplasm. It catalyses the reaction pseudouridine(1915) in 23S rRNA + S-adenosyl-L-methionine = N(3)-methylpseudouridine(1915) in 23S rRNA + S-adenosyl-L-homocysteine + H(+). Specifically methylates the pseudouridine at position 1915 (m3Psi1915) in 23S rRNA. This chain is Ribosomal RNA large subunit methyltransferase H, found in Nitratiruptor sp. (strain SB155-2).